The primary structure comprises 313 residues: Ribosomal RNA small subunit methyltransferase H (313 aa).

Residues 35–37 (GGH), Asp-55, Phe-81, Asp-103, and Gln-110 each bind S-adenosyl-L-methionine.

The protein belongs to the methyltransferase superfamily. RsmH family.

The protein resides in the cytoplasm. It catalyses the reaction cytidine(1402) in 16S rRNA + S-adenosyl-L-methionine = N(4)-methylcytidine(1402) in 16S rRNA + S-adenosyl-L-homocysteine + H(+). Specifically methylates the N4 position of cytidine in position 1402 (C1402) of 16S rRNA. This chain is Ribosomal RNA small subunit methyltransferase H, found in Pseudomonas aeruginosa (strain UCBPP-PA14).